The primary structure comprises 327 residues: Glycoprotein integral membrane protein 1 (327 aa).

Residues 1–23 (MEGGLSAPLSVRLLLFIALPAAG) form the signal peptide. Topologically, residues 24–259 (WLTTNAPRPP…LCRFWSSVVP (236 aa)) are extracellular. N-linked (GlcNAc...) asparagine glycosylation is found at Asn44, Asn62, and Asn146. Residues 260-280 (VLFMFLDVMVVGVLGAAGVIA) form a helical membrane-spanning segment. Residues 281 to 327 (VLKLLFPVCENKGILQVDKMNGISVPIILYPDGSEKTAQKLTDKTDI) are Cytoplasmic-facing.

It localises to the membrane. This chain is Glycoprotein integral membrane protein 1 (Ginm1), found in Mus musculus (Mouse).